The chain runs to 247 residues: Exosome complex component Rrp4 (247 aa).

The 74-residue stretch at 75–148 (DDLVIGIVEN…RDPVITVKGK (74 aa)) folds into the S1 motif domain. The KH domain occupies 154-220 (TEGVVVDVKP…QAIKLIELKA (67 aa)).

This sequence belongs to the RRP4 family. Component of the archaeal exosome complex. Forms a trimer of Rrp4 and/or Csl4 subunits. The trimer associates with a hexameric ring-like arrangement composed of 3 Rrp41-Rrp42 heterodimers.

Its subcellular location is the cytoplasm. Functionally, non-catalytic component of the exosome, which is a complex involved in RNA degradation. Increases the RNA binding and the efficiency of RNA degradation. Confers strong poly(A) specificity to the exosome. In Thermosphaera aggregans (strain DSM 11486 / M11TL), this protein is Exosome complex component Rrp4.